The chain runs to 230 residues: Ribonuclease 3 (230 aa).

One can recognise an RNase III domain in the interval 10-133 (DPRLLSRIGY…IIGAIYLDSS (124 aa)). Glutamate 46 provides a ligand contact to Mg(2+). Aspartate 50 is a catalytic residue. Mg(2+) is bound by residues aspartate 119 and glutamate 122. Glutamate 122 is a catalytic residue. The DRBM domain maps to 161–230 (DPKSRLQEYL…AAEILKLLEQ (70 aa)).

The protein belongs to the ribonuclease III family. Homodimer. The cofactor is Mg(2+).

The protein resides in the cytoplasm. The catalysed reaction is Endonucleolytic cleavage to 5'-phosphomonoester.. In terms of biological role, digests double-stranded RNA. Involved in the processing of primary rRNA transcript to yield the immediate precursors to the large and small rRNAs (23S and 16S). Processes some mRNAs, and tRNAs when they are encoded in the rRNA operon. Processes pre-crRNA and tracrRNA of type II CRISPR loci if present in the organism. The protein is Ribonuclease 3 of Acinetobacter baumannii (strain SDF).